The chain runs to 603 residues: Alpha-1,2-mannosyltransferase algn-9 (603 aa).

Residues 1–25 (MVTHRRKGGSGPPQKPPPRIVDRSS) form a disordered region. The Lumenal segment spans residues 1–108 (MVTHRRKGGS…EYSPVYAIRS (108 aa)). A helical membrane pass occupies residues 109-129 (YFYIYLHYIPASLFANLFGDT). Position 130 (lysine 130) is a topological domain, cytoplasmic. The helical transmembrane segment at 131–151 (IVVFTLIRLTIGLFCLLGEYY) threads the bilayer. Topologically, residues 152 to 166 (AFDAICKKINIATGR) are lumenal. Residues 167-187 (FFILFSIFSSGMFLASTAFVP) traverse the membrane as a helical segment. Over 188-195 (SSFCMAIT) the chain is Cytoplasmic. A helical transmembrane segment spans residues 196–216 (FYILGAYLNENWTAGIFCVAF). Topologically, residues 217–218 (ST) are lumenal. A helical membrane pass occupies residues 219–239 (MVGWPFSAVLGLPIVADMLLL). Over 240 to 245 (KGLRIR) the chain is Cytoplasmic. Residues 246-266 (FILTSLVIGLCIGGVQVITDS) traverse the membrane as a helical segment. Residues 267-310 (HYFGKTVLAPLNIFLYNVVSGPGPSLYGEEPLSFYIKNLFNNWN) lie on the Lumenal side of the membrane. The chain crosses the membrane as a helical span at residues 311–331 (IVIFAAPFGFPLSLAYFTKVW). The Cytoplasmic segment spans residues 332–343 (MSQDRNVALYQR). Residues 344–364 (FAPIILLAVTTAAWLLIFGSQ) traverse the membrane as a helical segment. At 365 to 370 (AHKEER) the chain is on the lumenal side. A helical membrane pass occupies residues 371–391 (FLFPIYPFIAFFAALALDATN). Residues 392–397 (RLCLKK) are Cytoplasmic-facing. Residues 398–418 (LGMDNILSILFILCFAILSAS) traverse the membrane as a helical segment. Residues 419-603 (RTYSIHNNYG…TCTLYRKSNL (185 aa)) lie on the Lumenal side of the membrane. Residue asparagine 443 is glycosylated (N-linked (GlcNAc...) asparagine).

This sequence belongs to the glycosyltransferase 22 family.

It localises to the endoplasmic reticulum membrane. It carries out the reaction an alpha-D-Man-(1-&gt;2)-alpha-D-Man-(1-&gt;2)-alpha-D-Man-(1-&gt;3)-[alpha-D-Man-(1-&gt;3)-alpha-D-Man-(1-&gt;6)]-beta-D-Man-(1-&gt;4)-beta-D-GlcNAc-(1-&gt;4)-alpha-D-GlcNAc-diphospho-di-trans,poly-cis-dolichol + a di-trans,poly-cis-dolichyl beta-D-mannosyl phosphate = an alpha-D-Man-(1-&gt;2)-alpha-D-Man-(1-&gt;2)-alpha-D-Man-(1-&gt;3)-[alpha-D-Man-(1-&gt;2)-alpha-D-Man-(1-&gt;3)-alpha-D-Man-(1-&gt;6)]-beta-D-Man-(1-&gt;4)-beta-D-GlcNAc-(1-&gt;4)-alpha-D-GlcNAc-diphospho-di-trans,poly-cis-dolichol + a di-trans,poly-cis-dolichyl phosphate + H(+). The catalysed reaction is an alpha-D-Man-(1-&gt;2)-alpha-D-Man-(1-&gt;2)-alpha-D-Man-(1-&gt;3)-[alpha-D-Man-(1-&gt;2)-alpha-D-Man-(1-&gt;3)-[alpha-D-Man-(1-&gt;6)]-alpha-D-Man-(1-&gt;6)]-beta-D-Man-(1-&gt;4)-beta-D-GlcNAc-(1-&gt;4)-alpha-D-GlcNAc-diphospho-di-trans,poly-cis-dolichol + a di-trans,poly-cis-dolichyl beta-D-mannosyl phosphate = an alpha-D-Man-(1-&gt;2)-alpha-D-Man-(1-&gt;2)-alpha-D-Man-(1-&gt;3)-[alpha-D-Man-(1-&gt;2)-alpha-D-Man-(1-&gt;3)-[alpha-D-Man-(1-&gt;2)-alpha-D-Man-(1-&gt;6)]-alpha-D-Man-(1-&gt;6)]-beta-D-Man-(1-&gt;4)-beta-D-GlcNAc-(1-&gt;4)-alpha-D-GlcNAc-diphospho-di-trans,poly-cis-dolichol + a di-trans,poly-cis-dolichyl phosphate + H(+). The protein operates within protein modification; protein glycosylation. Its function is as follows. Catalyzes the transfer of mannose from Dol-P-Man to lipid-linked oligosaccharides. The sequence is that of Alpha-1,2-mannosyltransferase algn-9 from Caenorhabditis elegans.